Here is a 240-residue protein sequence, read N- to C-terminus: Probable Ni/Fe-hydrogenase B-type cytochrome subunit (240 aa).

The next 4 helical transmembrane spans lie at 31–51 (LWHWVTALSIVVLGVTGYFIG), 75–95 (FAAGYVLAIGFLGRVYWAFVG), 142–163 (LAMFCFFVVGAVFMSVTGFALY), and 196–213 (LGMWYLVVFVMVHVYLAV).

This sequence belongs to the HupC/HyaC/HydC family.

Its subcellular location is the cell membrane. Its function is as follows. Probable b-type cytochrome. The protein is Probable Ni/Fe-hydrogenase B-type cytochrome subunit (hoxZ) of Azotobacter vinelandii.